A 766-amino-acid chain; its full sequence is Protein zer-1 homolog (766 aa).

Ala-2 is modified (N-acetylalanine). LRR repeat units follow at residues 226–245 (SLVL…IVQL), 246–268 (HKLR…KLTR), and 278–302 (LGNL…KMEE). ARM repeat units lie at residues 427–467 (RSEQ…NFGI), 511–556 (DNDH…NITD), 558–600 (TPDN…NVAE), 602–643 (KELR…HIMF), and 714–756 (PDKY…HCSN).

This sequence belongs to the zyg-11 family. Interacts with the ELOC-ELOB/Elongin BC complex. Part of an E3 ubiquitin ligase complex including ZER1, CUL2 and Elongin BC.

Functionally, serves as substrate adapter subunit in the E3 ubiquitin ligase complex ZYG11B-CUL2-Elongin BC. Acts redudantly with ZYG11B to target substrates bearing N-terminal glycine degrons for proteasomal degradation. Involved in the clearance of proteolytic fragments generated by caspase cleavage during apoptosis since N-terminal glycine degrons are strongly enriched at caspase cleavage sites. Also important in the quality control of protein N-myristoylation in which N-terminal glycine degrons are conditionally exposed after a failure of N-myristoylation. The protein is Protein zer-1 homolog (ZER1) of Pongo abelii (Sumatran orangutan).